The following is a 758-amino-acid chain: Polyribonucleotide nucleotidyltransferase (758 aa).

Asp-482 and Asp-488 together coordinate Mg(2+). Residues 549–608 (PRVLSFYIDKDKISAAIGTKGKNIRSVCERSNAKIEIGDDGKVSVFAISSTEAEAAKNMM) enclose the KH domain. The S1 motif domain maps to 618–686 (GSIIDAKVVK…KGGCPKLSRR (69 aa)). The disordered stretch occupies residues 707–758 (DGLNNRDNYYNNSFNKKPEDNYHSNRPTRPRSGFSNRSRPKFGNNDSSSGFY). Residues 711-721 (NRDNYYNNSFN) show a composition bias toward low complexity.

It belongs to the polyribonucleotide nucleotidyltransferase family. It depends on Mg(2+) as a cofactor.

It is found in the cytoplasm. The enzyme catalyses RNA(n+1) + phosphate = RNA(n) + a ribonucleoside 5'-diphosphate. In terms of biological role, involved in mRNA degradation. Catalyzes the phosphorolysis of single-stranded polyribonucleotides processively in the 3'- to 5'-direction. The polypeptide is Polyribonucleotide nucleotidyltransferase (Wolbachia pipientis subsp. Culex pipiens (strain wPip)).